A 548-amino-acid chain; its full sequence is ADP,ATP carrier protein 1 (548 aa).

The next 2 membrane-spanning stretches (helical) occupy residues Arg-39–Ser-59 and Ser-75–Ile-95. An N-linked (GlcNAc...) asparagine glycan is attached at Asn-101. A run of 8 helical transmembrane segments spans residues Val-107–Met-127, Met-149–Ser-169, Leu-171–Leu-191, Phe-204–Lys-224, Leu-239–Ile-259, Leu-302–Ala-322, Ile-350–Ile-370, and Gly-374–Phe-394. N-linked (GlcNAc...) asparagine glycosylation is found at Asn-400 and Asn-406. The chain crosses the membrane as a helical span at residues Leu-410–Val-430. Asn-488 is a glycosylation site (N-linked (GlcNAc...) asparagine). The chain crosses the membrane as a helical span at residues Lys-494 to Val-514.

The protein belongs to the ADP/ATP translocase tlc family.

Its subcellular location is the cell membrane. Its function is as follows. ATP transporter involved in the uptake of ATP from the host cell cytoplasm. Provides the microsporidian cell with host ATP in exchange for ADP. This is an obligate exchange system. This energy acquiring activity is an important component of microsporidian parasitism. The sequence is that of ADP,ATP carrier protein 1 (ANC1) from Paranosema grylli (Microsporidian parasite).